The following is a 280-amino-acid chain: Formamidopyrimidine-DNA glycosylase (280 aa).

The active-site Schiff-base intermediate with DNA is proline 2. Residue glutamate 3 is the Proton donor of the active site. Lysine 53 acts as the Proton donor; for beta-elimination activity in catalysis. DNA is bound by residues histidine 91, arginine 110, and arginine 152. An FPG-type zinc finger spans residues 239-273 (HVYGRAGQPCDRCGTPIEKIVLGQRGTHFCPVCQP). The Proton donor; for delta-elimination activity role is filled by arginine 263.

It belongs to the FPG family. Monomer. Zn(2+) is required as a cofactor.

The enzyme catalyses Hydrolysis of DNA containing ring-opened 7-methylguanine residues, releasing 2,6-diamino-4-hydroxy-5-(N-methyl)formamidopyrimidine.. It carries out the reaction 2'-deoxyribonucleotide-(2'-deoxyribose 5'-phosphate)-2'-deoxyribonucleotide-DNA = a 3'-end 2'-deoxyribonucleotide-(2,3-dehydro-2,3-deoxyribose 5'-phosphate)-DNA + a 5'-end 5'-phospho-2'-deoxyribonucleoside-DNA + H(+). Involved in base excision repair of DNA damaged by oxidation or by mutagenic agents. Acts as a DNA glycosylase that recognizes and removes damaged bases. Has a preference for oxidized purines, such as 7,8-dihydro-8-oxoguanine (8-oxoG). Has AP (apurinic/apyrimidinic) lyase activity and introduces nicks in the DNA strand. Cleaves the DNA backbone by beta-delta elimination to generate a single-strand break at the site of the removed base with both 3'- and 5'-phosphates. This Deinococcus radiodurans (strain ATCC 13939 / DSM 20539 / JCM 16871 / CCUG 27074 / LMG 4051 / NBRC 15346 / NCIMB 9279 / VKM B-1422 / R1) protein is Formamidopyrimidine-DNA glycosylase (mutM).